We begin with the raw amino-acid sequence, 602 residues long: Aspartate--tRNA(Asp/Asn) ligase (602 aa).

E175 lines the L-aspartate pocket. The interval 199–202 (QIFK) is aspartate. R221 contacts L-aspartate. ATP-binding positions include 221–223 (RDE) and Q230. H458 lines the L-aspartate pocket. Position 492 (E492) interacts with ATP. R499 contacts L-aspartate. ATP is bound at residue 544–547 (GLDR).

The protein belongs to the class-II aminoacyl-tRNA synthetase family. Type 1 subfamily. As to quaternary structure, homodimer.

Its subcellular location is the cytoplasm. It catalyses the reaction tRNA(Asx) + L-aspartate + ATP = L-aspartyl-tRNA(Asx) + AMP + diphosphate. Aspartyl-tRNA synthetase with relaxed tRNA specificity since it is able to aspartylate not only its cognate tRNA(Asp) but also tRNA(Asn). Reaction proceeds in two steps: L-aspartate is first activated by ATP to form Asp-AMP and then transferred to the acceptor end of tRNA(Asp/Asn). The protein is Aspartate--tRNA(Asp/Asn) ligase of Cupriavidus metallidurans (strain ATCC 43123 / DSM 2839 / NBRC 102507 / CH34) (Ralstonia metallidurans).